The sequence spans 185 residues: MSRRNKKRSRRRRKKPLNDIQPGPSKSSAQDEPIKSVSHHLSKIGTNPTLAFILGGNEDLSDDSDWDENFSLENTLMPLNEVSLNDKHNSKHFNKGFDNNTALHEVNTKWEAFYSSVKIRQRNVKVHFATDDILVDVREADDIDRKGPWEQAAVDRLRFQRRITDTEEILSTVFLRKKLNPMEHE.

Residues 1–15 (MSRRNKKRSRRRRKK) are compositionally biased toward basic residues. The interval 1 to 38 (MSRRNKKRSRRRRKKPLNDIQPGPSKSSAQDEPIKSVS) is disordered. 2 important for host CHOP inhibition regions span residues 126-128 (VHF) and 170-174 (LSTVF).

The protein belongs to the asfivirus DP71L family. Interacts (via C-terminus) with host PPP1CB.

In terms of biological role, interacts with the host phosphatase PP1 catalytic subunit (PPP1CB) and recruits it to dephosphorylate EIF2S1/eIF2alpha and therefore restores the host translation that has been shut-down by the host. Also inhibits the EIF2S1/eIF2alpha-ATF4-DDIT3/CHOP pathway. The protein is Protein DP71L of African swine fever virus (isolate Pig/Kenya/KEN-50/1950) (ASFV).